A 23-amino-acid polypeptide reads, in one-letter code: Septenin 2d (23 aa).

As to expression, expressed in skin glands.

The protein resides in the secreted. Functionally, may act as an antimicrobial peptide. The protein is Septenin 2d of Osteopilus septentrionalis (Cuban treefrog).